Here is a 136-residue protein sequence, read N- to C-terminus: Mitochondrial pyruvate carrier 1-like protein (136 aa).

The Mitochondrial matrix segment spans residues 2–19 (ARMAVLWRKMRDNFQSKE). Residues 20–42 (FREYVSSTHFWGPAFSWGLPLAA) form a helical membrane-spanning segment. The Mother cell cytoplasmic portion of the chain corresponds to 43-51 (FKDMKASPE). A helical membrane pass occupies residues 52–74 (IISGRMTTALILYSAIFMRFAYR). Over 75 to 136 (VQPRNLLLMA…PGSQPPKQAS (62 aa)) the chain is Mitochondrial matrix. Residues 111–136 (EAKARDPPATAAAATSPGSQPPKQAS) form a disordered region. The span at 117–136 (PPATAAAATSPGSQPPKQAS) shows a compositional bias: low complexity.

It belongs to the mitochondrial pyruvate carrier (MPC) (TC 2.A.105) family.

The protein localises to the mitochondrion inner membrane. The enzyme catalyses pyruvate(out) + H(+)(out) = pyruvate(in) + H(+)(in). Functionally, mediates the uptake of pyruvate into mitochondria. The protein is Mitochondrial pyruvate carrier 1-like protein (MPC1L) of Homo sapiens (Human).